We begin with the raw amino-acid sequence, 155 residues long: UPF0260 protein Smed_0627 (155 aa).

This sequence belongs to the UPF0260 family.

The protein is UPF0260 protein Smed_0627 of Sinorhizobium medicae (strain WSM419) (Ensifer medicae).